The primary structure comprises 473 residues: 3-isopropylmalate dehydratase large subunit (473 aa).

Residues C351, C414, and C417 each contribute to the [4Fe-4S] cluster site.

It belongs to the aconitase/IPM isomerase family. LeuC type 1 subfamily. In terms of assembly, heterodimer of LeuC and LeuD. [4Fe-4S] cluster is required as a cofactor.

It carries out the reaction (2R,3S)-3-isopropylmalate = (2S)-2-isopropylmalate. It functions in the pathway amino-acid biosynthesis; L-leucine biosynthesis; L-leucine from 3-methyl-2-oxobutanoate: step 2/4. Its function is as follows. Catalyzes the isomerization between 2-isopropylmalate and 3-isopropylmalate, via the formation of 2-isopropylmaleate. This chain is 3-isopropylmalate dehydratase large subunit, found in Polaromonas sp. (strain JS666 / ATCC BAA-500).